A 75-amino-acid polypeptide reads, in one-letter code: Kappa-thalatoxin-Cad2a (75 aa).

Residues 1–22 (MKFQMIAAVLLIAFCLCVVVTA) form the signal peptide. Positions 23 to 40 (RMELQDVEDMKNGSFQKR) are excised as a propeptide. Positions 43 to 75 (CIDTIPKSRCTAFQCKNSMKYRLSFCRKTCGTC) constitute a ShKT domain. Disulfide bonds link Cys-43-Cys-75, Cys-52-Cys-68, and Cys-57-Cys-72.

This sequence belongs to the sea anemone type 1 potassium channel toxin family. Type 1a subfamily.

The protein resides in the secreted. It localises to the nematocyst. Its function is as follows. Inhibits voltage-gated potassium channels (Kv) with higher potency for Kv1.1/KCNA1 and Kv1.3/KCNA3. The chain is Kappa-thalatoxin-Cad2a from Cryptodendrum adhaesivum (Adhesive sea anemone).